The following is a 363-amino-acid chain: Aminomethyltransferase (363 aa).

The protein belongs to the GcvT family. In terms of assembly, the glycine cleavage system is composed of four proteins: P, T, L and H.

It catalyses the reaction N(6)-[(R)-S(8)-aminomethyldihydrolipoyl]-L-lysyl-[protein] + (6S)-5,6,7,8-tetrahydrofolate = N(6)-[(R)-dihydrolipoyl]-L-lysyl-[protein] + (6R)-5,10-methylene-5,6,7,8-tetrahydrofolate + NH4(+). Functionally, the glycine cleavage system catalyzes the degradation of glycine. This is Aminomethyltransferase from Staphylococcus aureus (strain bovine RF122 / ET3-1).